The chain runs to 952 residues: Glycine dehydrogenase (decarboxylating) (952 aa).

Position 703 is an N6-(pyridoxal phosphate)lysine (K703).

Belongs to the GcvP family. The glycine cleavage system is composed of four proteins: P, T, L and H. Requires pyridoxal 5'-phosphate as cofactor.

The catalysed reaction is N(6)-[(R)-lipoyl]-L-lysyl-[glycine-cleavage complex H protein] + glycine + H(+) = N(6)-[(R)-S(8)-aminomethyldihydrolipoyl]-L-lysyl-[glycine-cleavage complex H protein] + CO2. The glycine cleavage system catalyzes the degradation of glycine. The P protein binds the alpha-amino group of glycine through its pyridoxal phosphate cofactor; CO(2) is released and the remaining methylamine moiety is then transferred to the lipoamide cofactor of the H protein. The polypeptide is Glycine dehydrogenase (decarboxylating) (Mycolicibacterium gilvum (strain PYR-GCK) (Mycobacterium gilvum (strain PYR-GCK))).